The chain runs to 89 residues: Small ribosomal subunit protein bS16c (89 aa).

The protein belongs to the bacterial ribosomal protein bS16 family.

Its subcellular location is the plastid. It localises to the chloroplast. In Glycine max (Soybean), this protein is Small ribosomal subunit protein bS16c.